Reading from the N-terminus, the 582-residue chain is External alternative NADH-ubiquinone oxidoreductase, mitochondrial (582 aa).

Residues 1–30 constitute a mitochondrion transit peptide; that stretch reads MLRLRPAVRAVSVARSVALTRSLHVSVAKF. The tract at residues 46–65 is disordered; sequence KQTAGHQGHHQEIPKPDENH. Over residues 54-65 the composition is skewed to basic and acidic residues; it reads HHQEIPKPDENH. Residue 114–144 participates in FAD binding; the sequence is TLVVLGSGWGSVSFLKKLDTSNYNVIVVSPR. 277–313 is an NAD(+) binding site; that stretch reads LHTVVVGGGPTGVEFAAELQDFFEDDLRKWIPDIRDD. Positions 454 to 501 form a coiled coil; sequence LLNGIAKTEDLNNEITNLEKQSEHTFDEQERKNIFAQLESKSRKLRRS.

This sequence belongs to the NADH dehydrogenase family. FAD serves as cofactor.

Its subcellular location is the mitochondrion inner membrane. It carries out the reaction a quinone + NADH + H(+) = a quinol + NAD(+). The catalysed reaction is a ubiquinone + NADH + H(+) = a ubiquinol + NAD(+). In terms of biological role, alternative NADH-ubiquinone oxidoreductase which catalyzes the oxidation of mitochondrial NADH does not translocate protons across the inner mitochondrial membrane. In Yarrowia lipolytica (strain CLIB 122 / E 150) (Yeast), this protein is External alternative NADH-ubiquinone oxidoreductase, mitochondrial (NDH2).